Consider the following 143-residue polypeptide: Transcriptional regulator MraZ (143 aa).

2 consecutive SpoVT-AbrB domains span residues Thr-5–Glu-47 and Thr-76–Ala-119.

The protein belongs to the MraZ family. In terms of assembly, forms oligomers.

It is found in the cytoplasm. It localises to the nucleoid. In Rhodococcus jostii (strain RHA1), this protein is Transcriptional regulator MraZ.